The primary structure comprises 547 residues: CTP synthase (547 aa).

Residues 1–265 are amidoligase domain; that stretch reads MTRYVFITGG…DEIVLRKLHI (265 aa). Ser13 serves as a coordination point for CTP. A UTP-binding site is contributed by Ser13. Residues 14 to 19 and Asp71 contribute to the ATP site; that span reads SLGKGI. The Mg(2+) site is built by Asp71 and Glu139. CTP contacts are provided by residues 146-148, 186-191, and Lys222; these read DIE and KTKPTQ. UTP contacts are provided by residues 186–191 and Lys222; that span reads KTKPTQ. A Glutamine amidotransferase type-1 domain is found at 290-541; the sequence is TVGMVGKYVD…IRAARAQHEK (252 aa). An L-glutamine-binding site is contributed by Gly351. Cys378 serves as the catalytic Nucleophile; for glutamine hydrolysis. Residues 379 to 382, Glu402, and Arg469 contribute to the L-glutamine site; that span reads LGMQ. Catalysis depends on residues His514 and Glu516.

This sequence belongs to the CTP synthase family. In terms of assembly, homotetramer.

The catalysed reaction is UTP + L-glutamine + ATP + H2O = CTP + L-glutamate + ADP + phosphate + 2 H(+). The enzyme catalyses L-glutamine + H2O = L-glutamate + NH4(+). It carries out the reaction UTP + NH4(+) + ATP = CTP + ADP + phosphate + 2 H(+). It functions in the pathway pyrimidine metabolism; CTP biosynthesis via de novo pathway; CTP from UDP: step 2/2. Allosterically activated by GTP, when glutamine is the substrate; GTP has no effect on the reaction when ammonia is the substrate. The allosteric effector GTP functions by stabilizing the protein conformation that binds the tetrahedral intermediate(s) formed during glutamine hydrolysis. Inhibited by the product CTP, via allosteric rather than competitive inhibition. In terms of biological role, catalyzes the ATP-dependent amination of UTP to CTP with either L-glutamine or ammonia as the source of nitrogen. Regulates intracellular CTP levels through interactions with the four ribonucleotide triphosphates. This chain is CTP synthase, found in Thioalkalivibrio sulfidiphilus (strain HL-EbGR7).